Consider the following 168-residue polypeptide: MSDPQGDAPQLTHFVGGQPRMVDVSAKAPTTRTARAEAWVLLPPESRAALLAGQTPKGDPLSVARLAGLAGSKRTADLIFLCHPIPVTSAEVDVTLKDAGIHITALVKTTAPTGVEMEALTAVTVAALNVYDMLKATSKAIEVSGVRLLSKTGGKSGDYQAAERPPQP.

Residues 81–83 and 117–118 contribute to the substrate site; these read LCH and ME. D132 is a catalytic residue.

It belongs to the MoaC family. As to quaternary structure, homohexamer; trimer of dimers.

It carries out the reaction (8S)-3',8-cyclo-7,8-dihydroguanosine 5'-triphosphate = cyclic pyranopterin phosphate + diphosphate. It functions in the pathway cofactor biosynthesis; molybdopterin biosynthesis. Its function is as follows. Catalyzes the conversion of (8S)-3',8-cyclo-7,8-dihydroguanosine 5'-triphosphate to cyclic pyranopterin monophosphate (cPMP). The polypeptide is Cyclic pyranopterin monophosphate synthase (Deinococcus radiodurans (strain ATCC 13939 / DSM 20539 / JCM 16871 / CCUG 27074 / LMG 4051 / NBRC 15346 / NCIMB 9279 / VKM B-1422 / R1)).